The chain runs to 332 residues: Fructose-1,6-bisphosphatase class 1 (332 aa).

Residues Glu-89, Asp-110, Leu-112, and Asp-113 each contribute to the Mg(2+) site. Residues 113–116 (DGSS), Asn-206, Tyr-239, 257–259 (YLY), and Lys-269 contribute to the substrate site. Glu-275 serves as a coordination point for Mg(2+).

The protein belongs to the FBPase class 1 family. As to quaternary structure, homotetramer. Requires Mg(2+) as cofactor.

The protein localises to the cytoplasm. The enzyme catalyses beta-D-fructose 1,6-bisphosphate + H2O = beta-D-fructose 6-phosphate + phosphate. It participates in carbohydrate biosynthesis; gluconeogenesis. This chain is Fructose-1,6-bisphosphatase class 1, found in Klebsiella pneumoniae (strain 342).